The following is a 358-amino-acid chain: Heme A synthase (358 aa).

8 consecutive transmembrane segments (helical) span residues 22–42 (IQVW…VGGA), 107–127 (VLGR…WATK), 133–153 (ILFP…IGWW), 172–192 (LAFH…LSRG), 208–228 (FAAW…LVAG), 269–289 (FIHR…AFYV), 302–322 (AFLI…TLLH), and 324–344 (VPIS…CFAV). His271 is a binding site for heme. His332 is a heme binding site.

This sequence belongs to the COX15/CtaA family. Type 2 subfamily. As to quaternary structure, interacts with CtaB. Requires heme b as cofactor.

Its subcellular location is the cell membrane. It carries out the reaction Fe(II)-heme o + 2 A + H2O = Fe(II)-heme a + 2 AH2. It participates in porphyrin-containing compound metabolism; heme A biosynthesis; heme A from heme O: step 1/1. In terms of biological role, catalyzes the conversion of heme O to heme A by two successive hydroxylations of the methyl group at C8. The first hydroxylation forms heme I, the second hydroxylation results in an unstable dihydroxymethyl group, which spontaneously dehydrates, resulting in the formyl group of heme A. The polypeptide is Heme A synthase (Bartonella tribocorum (strain CIP 105476 / IBS 506)).